Here is a 941-residue protein sequence, read N- to C-terminus: ATP-dependent 6-phosphofructokinase subunit beta (941 aa).

Residues 2-558 are N-terminal catalytic PFK domain 1; that stretch reads PDASLFNGTS…HMKNFISTNS (557 aa). ATP contacts are provided by residues Gly-191, 255–256, and 285–288; these read RC and GDGS. Asp-286 serves as a coordination point for Mg(2+). Beta-D-fructose 6-phosphate-binding positions include 331 to 333, Arg-368, and 375 to 377; these read SID and MGR. Residue Asp-333 is the Proton acceptor of the active site. Residues Ile-395, 400 to 405, and Gln-410 contribute to the ATP site; that span reads KPASSR. Beta-D-fructose 6-phosphate-binding positions include Glu-432, Arg-460, and 466–469; that span reads HVQR. 557-558 contributes to the ATP binding site; that stretch reads NS. An interdomain linker region spans residues 559-572; that stretch reads ADHVPPSLPLEKRK. The C-terminal regulatory PFK domain 2 stretch occupies residues 573–941; the sequence is KIAIINVGAP…SDMLSGRTSL (369 aa). Residues Arg-643, 701 to 705, Arg-739, 746 to 748, Glu-806, Lys-832, 838 to 841, and Arg-918 contribute to the beta-D-fructose 2,6-bisphosphate site; these read TISNN, QGG, and HVQQ.

This sequence belongs to the phosphofructokinase type A (PFKA) family. ATP-dependent PFK group I subfamily. Eukaryotic two domain clade 'E' sub-subfamily. In terms of assembly, heterododecamer of 4 alpha, 4 beta and 4 gamma chains. Requires Mg(2+) as cofactor.

The protein resides in the cytoplasm. The enzyme catalyses beta-D-fructose 6-phosphate + ATP = beta-D-fructose 1,6-bisphosphate + ADP + H(+). It participates in carbohydrate degradation; glycolysis; D-glyceraldehyde 3-phosphate and glycerone phosphate from D-glucose: step 3/4. Allosterically activated by ADP, AMP, or fructose 2,6-bisphosphate, and allosterically inhibited by ATP or citrate. Functionally, catalyzes the phosphorylation of D-fructose 6-phosphate to fructose 1,6-bisphosphate by ATP, the first committing step of glycolysis. This chain is ATP-dependent 6-phosphofructokinase subunit beta (PFK2), found in Komagataella pastoris (Yeast).